A 290-amino-acid polypeptide reads, in one-letter code: Protease HtpX (290 aa).

The next 2 membrane-spanning stretches (helical) occupy residues 6–26 (LFLV…NILF) and 36–56 (ISGL…ISLL). His143 lines the Zn(2+) pocket. Glu144 is a catalytic residue. His147 contacts Zn(2+). 2 consecutive transmembrane segments (helical) span residues 158–178 (LIQG…AGVI) and 200–220 (ITVF…VMWF). Zn(2+) is bound at residue Glu225.

Belongs to the peptidase M48B family. It depends on Zn(2+) as a cofactor.

The protein resides in the cell inner membrane. This chain is Protease HtpX, found in Aeromonas hydrophila subsp. hydrophila (strain ATCC 7966 / DSM 30187 / BCRC 13018 / CCUG 14551 / JCM 1027 / KCTC 2358 / NCIMB 9240 / NCTC 8049).